Consider the following 353-residue polypeptide: Photosystem II protein D1 (353 aa).

Thr2 carries the N-acetylthreonine modification. A Phosphothreonine modification is found at Thr2. 3 helical membrane-spanning segments follow: residues 29–46, 118–133, and 142–156; these read YIGW…TATS, HFFI…EWEL, and WIAV…AATA. His118 contributes to the chlorophyll a binding site. Residue Tyr126 participates in pheophytin a binding. Residues Asp170 and Glu189 each coordinate [CaMn4O5] cluster. Residues 197-218 form a helical membrane-spanning segment; sequence FHMLGVAGVFGGSLFSAMHGSL. Residue His198 participates in chlorophyll a binding. Residues His215 and 264 to 265 each bind a quinone; that span reads SF. A Fe cation-binding site is contributed by His215. A Fe cation-binding site is contributed by His272. A helical transmembrane segment spans residues 274-288; that stretch reads FLAIWPVMGIWFTAL. [CaMn4O5] cluster-binding residues include His332, Glu333, Asp342, and Ala344. Positions 345–353 are excised as a propeptide; the sequence is SVEAPSINA.

Belongs to the reaction center PufL/M/PsbA/D family. As to quaternary structure, PSII is composed of 1 copy each of membrane proteins PsbA, PsbB, PsbC, PsbD, PsbE, PsbF, PsbH, PsbI, PsbJ, PsbK, PsbL, PsbM, PsbT, PsbX, PsbY, PsbZ, Psb30/Ycf12, at least 3 peripheral proteins of the oxygen-evolving complex and a large number of cofactors. It forms dimeric complexes. The D1/D2 heterodimer binds P680, chlorophylls that are the primary electron donor of PSII, and subsequent electron acceptors. It shares a non-heme iron and each subunit binds pheophytin, quinone, additional chlorophylls, carotenoids and lipids. D1 provides most of the ligands for the Mn4-Ca-O5 cluster of the oxygen-evolving complex (OEC). There is also a Cl(-1) ion associated with D1 and D2, which is required for oxygen evolution. The PSII complex binds additional chlorophylls, carotenoids and specific lipids. serves as cofactor. In terms of processing, tyr-161 forms a radical intermediate that is referred to as redox-active TyrZ, YZ or Y-Z. C-terminally processed by CTPA; processing is essential to allow assembly of the oxygen-evolving complex and thus photosynthetic growth.

The protein resides in the plastid. It is found in the chloroplast thylakoid membrane. The enzyme catalyses 2 a plastoquinone + 4 hnu + 2 H2O = 2 a plastoquinol + O2. In terms of biological role, photosystem II (PSII) is a light-driven water:plastoquinone oxidoreductase that uses light energy to abstract electrons from H(2)O, generating O(2) and a proton gradient subsequently used for ATP formation. It consists of a core antenna complex that captures photons, and an electron transfer chain that converts photonic excitation into a charge separation. The D1/D2 (PsbA/PsbD) reaction center heterodimer binds P680, the primary electron donor of PSII as well as several subsequent electron acceptors. The sequence is that of Photosystem II protein D1 from Ostreococcus tauri.